A 628-amino-acid polypeptide reads, in one-letter code: Biosynthetic arginine decarboxylase (628 aa).

Lys99 bears the N6-(pyridoxal phosphate)lysine mark. Residue 279–289 (VDVGGGLGIDY) coordinates substrate.

This sequence belongs to the Orn/Lys/Arg decarboxylase class-II family. SpeA subfamily. Mg(2+) serves as cofactor. The cofactor is pyridoxal 5'-phosphate.

The catalysed reaction is L-arginine + H(+) = agmatine + CO2. Catalyzes the biosynthesis of agmatine from arginine. The chain is Biosynthetic arginine decarboxylase from Xanthomonas campestris pv. campestris (strain ATCC 33913 / DSM 3586 / NCPPB 528 / LMG 568 / P 25).